Here is a 357-residue protein sequence, read N- to C-terminus: MNTLFMHCRPGFEGEVCSEIADLAARLDVSGYAKARPDTACAEFICTEADGAERLMNGQRFDTLIFPRQWARGLFLDLPETDRISVILAQLSTFPTCGSLWLEVVDTNDGKELSNFCKKFEAPLRKALTQAGKLVDDPRKPRLLLTFKSGREVFLGLAEADNSAMWPMGIPRLKFPREAPSRSTLKLEEAWHHFIPRDQWDERLSGDMTGVDLGAAPGGWTYQLVRRGMLVTAIDNGPMAESLMDTGLVQHLMADGFTYKPRHPVDWMVCDIVEKPARNAALLETWLGEGLCREAVVNLKLPMKQRYAEVRRLLDRIEEGFQARGVRVSIGCKQLYHDREEVTCHLRRLDVAKAARK.

Residues S183, 216–219 (APGG), D235, D255, and D271 contribute to the S-adenosyl-L-methionine site. The Proton acceptor role is filled by K300.

The protein belongs to the class I-like SAM-binding methyltransferase superfamily. RNA methyltransferase RlmE family. RlmM subfamily. As to quaternary structure, monomer.

It is found in the cytoplasm. It carries out the reaction cytidine(2498) in 23S rRNA + S-adenosyl-L-methionine = 2'-O-methylcytidine(2498) in 23S rRNA + S-adenosyl-L-homocysteine + H(+). Its function is as follows. Catalyzes the 2'-O-methylation at nucleotide C2498 in 23S rRNA. This chain is Ribosomal RNA large subunit methyltransferase M, found in Pseudomonas syringae pv. tomato (strain ATCC BAA-871 / DC3000).